Reading from the N-terminus, the 61-residue chain is UPF0434 protein Avin_14770 (61 aa).

This sequence belongs to the UPF0434 family.

The protein is UPF0434 protein Avin_14770 of Azotobacter vinelandii (strain DJ / ATCC BAA-1303).